A 559-amino-acid polypeptide reads, in one-letter code: Frizzled-1 (559 aa).

The signal sequence occupies residues 1-35; that stretch reads MKHSHLLQRCSAQLCTRGSSLILSLLLSVCLSVEG. Residues 36–239 are Extracellular-facing; it reads QYNGEKGISI…FAPEELNFAR (204 aa). The FZ domain occupies 46–165; that stretch reads PDHGYCQPIS…NGAGELCVGQ (120 aa). 5 disulfide bridges follow: C51-C112, C59-C105, C96-C133, C122-C162, and C126-C150. N-linked (GlcNAc...) asparagine glycosylation is present at N65. A glycan (N-linked (GlcNAc...) asparagine) is linked at N166. A helical membrane pass occupies residues 240-260; that stretch reads IWIGIWSVLCCASTLFTVLTY. Topologically, residues 261-273 are cytoplasmic; it reads LVDMKRFSYPERP. Residues 274–294 form a helical membrane-spanning segment; the sequence is IIFLSGCYTMVAIAYIAGFLL. At 295–321 the chain is on the extracellular side; that stretch reads EDKVVCNERFAEDGYKTVAQGTKKEGC. A helical membrane pass occupies residues 322 to 342; that stretch reads TFLFMMLYFFSMASSIWWVIL. Over 343 to 364 the chain is Cytoplasmic; the sequence is SLTWFLAAGMKWGHEAIEANSQ. Residues 365–385 traverse the membrane as a helical segment; sequence YFHLAAWAVPAIKTITILAVG. At 386 to 408 the chain is on the extracellular side; sequence QVDGDTLSGVCFVGINNVDALRG. Residues 409 to 429 form a helical membrane-spanning segment; the sequence is FVLAPLFVYLFIGTSFLLAGF. Topologically, residues 430–455 are cytoplasmic; that stretch reads VSLFRIRTIMKHDGTKTEKLEKLMVR. The helical transmembrane segment at 456–476 threads the bilayer; that stretch reads IGIFSVLYTVPATIVIACYFY. Topologically, residues 477–513 are extracellular; that stretch reads EQAFREQWEKSWISQSCKTYAIPCPSTGHPPMSPDFT. Residues 514–534 traverse the membrane as a helical segment; that stretch reads VFMIKYLMTLIVGITSGFWIW. The Cytoplasmic portion of the chain corresponds to 535-559; sequence SGKTLNSWRKFYTRLTNSKQGETTV. A Lys-Thr-X-X-X-Trp motif, mediates interaction with the PDZ domain of Dvl family members motif is present at residues 537–542; sequence KTLNSW. Positions 557-559 match the PDZ-binding motif; it reads TTV.

The protein belongs to the G-protein coupled receptor Fz/Smo family. In terms of assembly, interacts with wnt8. As to expression, in the embryo, expressed in the heart, pronephros and otic vesicles.

Its subcellular location is the cell membrane. Functionally, receptor for Wnt proteins. Functions in the canonical Wnt/beta-catenin signaling pathway. The canonical Wnt/beta-catenin signaling pathway leads to the activation of disheveled proteins, inhibition of GSK-3 kinase, nuclear accumulation of beta-catenin and activation of Wnt target genes. A second signaling pathway involving PKC and calcium fluxes has been seen for some family members, but it is not yet clear if it represents a distinct pathway or if it can be integrated in the canonical pathway, as PKC seems to be required for Wnt-mediated inactivation of GSK-3 kinase. Both pathways seem to involve interactions with G-proteins. May be involved in transduction and intercellular transmission of polarity information during tissue morphogenesis and/or in differentiated tissues. This Xenopus laevis (African clawed frog) protein is Frizzled-1 (fzd1).